The chain runs to 506 residues: AAA-ATPase At4g25835 (506 aa).

An N-terminal signal peptide occupies residues 1-20; sequence MKEYWTSLASLLGVLAFCQS. 244 to 251 lines the ATP pocket; sequence GPPGTGKS. Residues 462–506 are disordered; the sequence is GKSRVQNVSLEEQENRAFDSLYAEENGGEEEEIEDNICKSSDDCS. Positions 487-496 are enriched in acidic residues; it reads NGGEEEEIED. Basic and acidic residues predominate over residues 497-506; it reads NICKSSDDCS.

This sequence belongs to the AAA ATPase family. BCS1 subfamily. Mg(2+) is required as a cofactor.

The enzyme catalyses ATP + H2O = ADP + phosphate + H(+). This Arabidopsis thaliana (Mouse-ear cress) protein is AAA-ATPase At4g25835.